The following is a 249-amino-acid chain: Chitooligosaccharide deacetylase (249 aa).

2 residues coordinate Mg(2+): histidine 61 and histidine 125.

Belongs to the YdjC deacetylase family. ChbG subfamily. As to quaternary structure, homodimer. The cofactor is Mg(2+).

It is found in the cytoplasm. It carries out the reaction N,N'-diacetylchitobiose + H2O = N-acetyl-beta-D-glucosaminyl-(1-&gt;4)-D-glucosamine + acetate. The enzyme catalyses diacetylchitobiose-6'-phosphate + H2O = N'-monoacetylchitobiose-6'-phosphate + acetate. It participates in glycan degradation; chitin degradation. In terms of biological role, involved in the degradation of chitin. ChbG is essential for growth on the acetylated chitooligosaccharides chitobiose and chitotriose but is dispensable for growth on cellobiose and chitosan dimer, the deacetylated form of chitobiose. Deacetylation of chitobiose-6-P and chitotriose-6-P is necessary for both the activation of the chb promoter by the regulatory protein ChbR and the hydrolysis of phosphorylated beta-glucosides by the phospho-beta-glucosidase ChbF. Catalyzes the removal of only one acetyl group from chitobiose-6-P to yield monoacetylchitobiose-6-P, the inducer of ChbR and the substrate of ChbF. This Escherichia coli (strain K12 / MC4100 / BW2952) protein is Chitooligosaccharide deacetylase.